Reading from the N-terminus, the 480-residue chain is Ribulose bisphosphate carboxylase large chain (480 aa).

Positions 1 to 2 are excised as a propeptide; the sequence is MS. N-acetylproline is present on Pro-3. Residue Lys-14 is modified to N6,N6,N6-trimethyllysine. Positions 123 and 173 each coordinate substrate. Residue Lys-175 is the Proton acceptor of the active site. Position 177 (Lys-177) interacts with substrate. Mg(2+)-binding residues include Lys-201, Asp-203, and Glu-204. Lys-201 is subject to N6-carboxylysine. His-294 (proton acceptor) is an active-site residue. Substrate contacts are provided by Arg-295, His-327, and Ser-379.

Belongs to the RuBisCO large chain family. Type I subfamily. In terms of assembly, heterohexadecamer of 8 large chains and 8 small chains; disulfide-linked. The disulfide link is formed within the large subunit homodimers. The cofactor is Mg(2+). The disulfide bond which can form in the large chain dimeric partners within the hexadecamer appears to be associated with oxidative stress and protein turnover.

It is found in the plastid. Its subcellular location is the chloroplast. The catalysed reaction is 2 (2R)-3-phosphoglycerate + 2 H(+) = D-ribulose 1,5-bisphosphate + CO2 + H2O. It catalyses the reaction D-ribulose 1,5-bisphosphate + O2 = 2-phosphoglycolate + (2R)-3-phosphoglycerate + 2 H(+). In terms of biological role, ruBisCO catalyzes two reactions: the carboxylation of D-ribulose 1,5-bisphosphate, the primary event in carbon dioxide fixation, as well as the oxidative fragmentation of the pentose substrate in the photorespiration process. Both reactions occur simultaneously and in competition at the same active site. The chain is Ribulose bisphosphate carboxylase large chain from Gossypium barbadense (Sea Island cotton).